Reading from the N-terminus, the 191-residue chain is uncharacterized protein (191 aa).

A run of 4 helical transmembrane segments spans residues 12–32 (FAFL…FFTL), 48–68 (LVAL…LTLF), 92–112 (YISV…LLSL), and 168–188 (IFCL…SCAF).

The protein localises to the membrane. This is an uncharacterized protein from Saccharomyces cerevisiae (strain ATCC 204508 / S288c) (Baker's yeast).